The following is a 342-amino-acid chain: 4-hydroxythreonine-4-phosphate dehydrogenase (342 aa).

Positions 139 and 140 each coordinate substrate. Residues H174, H219, and H274 each coordinate a divalent metal cation. 3 residues coordinate substrate: K282, N291, and R300.

Belongs to the PdxA family. Homodimer. Requires Zn(2+) as cofactor. The cofactor is Mg(2+). Co(2+) is required as a cofactor.

The protein localises to the cytoplasm. It catalyses the reaction 4-(phosphooxy)-L-threonine + NAD(+) = 3-amino-2-oxopropyl phosphate + CO2 + NADH. Its pathway is cofactor biosynthesis; pyridoxine 5'-phosphate biosynthesis; pyridoxine 5'-phosphate from D-erythrose 4-phosphate: step 4/5. In terms of biological role, catalyzes the NAD(P)-dependent oxidation of 4-(phosphooxy)-L-threonine (HTP) into 2-amino-3-oxo-4-(phosphooxy)butyric acid which spontaneously decarboxylates to form 3-amino-2-oxopropyl phosphate (AHAP). The protein is 4-hydroxythreonine-4-phosphate dehydrogenase of Mesorhizobium japonicum (strain LMG 29417 / CECT 9101 / MAFF 303099) (Mesorhizobium loti (strain MAFF 303099)).